A 361-amino-acid polypeptide reads, in one-letter code: tRNA/tmRNA (uracil-C(5))-methyltransferase (361 aa).

Residues Gln185, Tyr213, Asn218, Glu234, and Asp294 each contribute to the S-adenosyl-L-methionine site. The Nucleophile role is filled by Cys319. Catalysis depends on Glu353, which acts as the Proton acceptor.

Belongs to the class I-like SAM-binding methyltransferase superfamily. RNA M5U methyltransferase family. TrmA subfamily.

The enzyme catalyses uridine(54) in tRNA + S-adenosyl-L-methionine = 5-methyluridine(54) in tRNA + S-adenosyl-L-homocysteine + H(+). It catalyses the reaction uridine(341) in tmRNA + S-adenosyl-L-methionine = 5-methyluridine(341) in tmRNA + S-adenosyl-L-homocysteine + H(+). Functionally, dual-specificity methyltransferase that catalyzes the formation of 5-methyluridine at position 54 (m5U54) in all tRNAs, and that of position 341 (m5U341) in tmRNA (transfer-mRNA). The sequence is that of tRNA/tmRNA (uracil-C(5))-methyltransferase from Pseudomonas syringae pv. syringae (strain B728a).